The following is a 213-amino-acid chain: Orotate phosphoribosyltransferase (213 aa).

K26 contacts 5-phospho-alpha-D-ribose 1-diphosphate. Residue F34–F35 coordinates orotate. 5-phospho-alpha-D-ribose 1-diphosphate contacts are provided by residues Y72–K73, R98, K99, K102, H104, and D123–S131. Orotate-binding residues include S127 and R155.

It belongs to the purine/pyrimidine phosphoribosyltransferase family. PyrE subfamily. Homodimer. The cofactor is Mg(2+).

The catalysed reaction is orotidine 5'-phosphate + diphosphate = orotate + 5-phospho-alpha-D-ribose 1-diphosphate. Its pathway is pyrimidine metabolism; UMP biosynthesis via de novo pathway; UMP from orotate: step 1/2. In terms of biological role, catalyzes the transfer of a ribosyl phosphate group from 5-phosphoribose 1-diphosphate to orotate, leading to the formation of orotidine monophosphate (OMP). The sequence is that of Orotate phosphoribosyltransferase from Neisseria meningitidis serogroup C (strain 053442).